The chain runs to 341 residues: Very-long-chain 3-oxoacyl-CoA reductase (341 aa).

The helical transmembrane segment at 17 to 37 threads the bilayer; that stretch reads ALYGALLLGVYKLTTFALSLV. NADP(+)-binding residues include valine 63, aspartate 117, asparagine 144, tyrosine 218, lysine 222, valine 251, and serine 253. Tyrosine 218 acts as the Proton donor in catalysis. Lysine 222 acts as the Lowers pKa of active site Tyr in catalysis.

This sequence belongs to the short-chain dehydrogenases/reductases (SDR) family.

The protein resides in the endoplasmic reticulum membrane. It catalyses the reaction a very-long-chain (3R)-3-hydroxyacyl-CoA + NADP(+) = a very-long-chain 3-oxoacyl-CoA + NADPH + H(+). The protein operates within lipid metabolism; fatty acid biosynthesis. Functionally, component of the microsomal membrane bound fatty acid elongation system, which produces the 26-carbon very long-chain fatty acids (VLCFA) from palmitate. Catalyzes the reduction of the 3-ketoacyl-CoA intermediate that is formed in each cycle of fatty acid elongation. VLCFAs serve as precursors for ceramide and sphingolipids. The polypeptide is Very-long-chain 3-oxoacyl-CoA reductase (Meyerozyma guilliermondii (strain ATCC 6260 / CBS 566 / DSM 6381 / JCM 1539 / NBRC 10279 / NRRL Y-324) (Yeast)).